Reading from the N-terminus, the 658-residue chain is Glycogen debranching enzyme (658 aa).

The active-site Nucleophile is D335. The active-site Proton donor is E370. The span at 457 to 468 (NDANGEGNRDGT) shows a compositional bias: basic and acidic residues. A disordered region spans residues 457 to 478 (NDANGEGNRDGTDSNFSNNHGT).

It belongs to the glycosyl hydrolase 13 family.

It carries out the reaction Hydrolysis of (1-&gt;6)-alpha-D-glucosidic linkages to branches with degrees of polymerization of three or four glucose residues in limit dextrin.. The protein operates within glycan degradation; glycogen degradation. Its function is as follows. Removes maltotriose and maltotetraose chains that are attached by 1,6-alpha-linkage to the limit dextrin main chain, generating a debranched limit dextrin. This chain is Glycogen debranching enzyme, found in Pectobacterium carotovorum subsp. carotovorum (strain PC1).